Consider the following 314-residue polypeptide: Ribonuclease Z (314 aa).

The Zn(2+) site is built by H62, H64, D66, H67, H144, D215, and H273. D66 serves as the catalytic Proton acceptor.

This sequence belongs to the RNase Z family. Homodimer. The cofactor is Zn(2+).

The catalysed reaction is Endonucleolytic cleavage of RNA, removing extra 3' nucleotides from tRNA precursor, generating 3' termini of tRNAs. A 3'-hydroxy group is left at the tRNA terminus and a 5'-phosphoryl group is left at the trailer molecule.. Functionally, zinc phosphodiesterase, which displays some tRNA 3'-processing endonuclease activity. Probably involved in tRNA maturation, by removing a 3'-trailer from precursor tRNA. This chain is Ribonuclease Z, found in Prochlorococcus marinus (strain NATL2A).